Consider the following 339-residue polypeptide: MRVYYDRDADMNLIKGKKVAIVGYGSQGRAHALNLKDSGVQNVQIALRSGSETVKKATADGFEVVSVAEAAKWADLIMMATPDELQADIYKEHIHDHLRDGAAVAFAHGLSIHFGLIEPKKTVDVVMIAPKGPGHTVRHEYQRGCGVPCLIAVAQDASGHAHSVALSYACGLGGGRAGVIETTFKEECETDLFGEQAVLCGGLVELIRAGYETLTQAGYAPEMAYFECLHEVKLIVDLMYEGGISNMNYSISNTAEWGEYMSGPRVITDETRAEMKRILKDIQTGKFTSNWIQEYKAGAAHFKSMRRLNDNHPIEEVGKKLRSMMPWIKSNALVDKERN.

Residues 1 to 182 enclose the KARI N-terminal Rossmann domain; sequence MRVYYDRDAD…GGGRAGVIET (182 aa). NADP(+) contacts are provided by residues 24-27, Arg48, Ser51, Thr53, and 83-86; these read YGSQ and DELQ. Residue His108 is part of the active site. Residue Gly134 participates in NADP(+) binding. The 146-residue stretch at 183 to 328 folds into the KARI C-terminal knotted domain; the sequence is TFKEECETDL…KKLRSMMPWI (146 aa). 4 residues coordinate Mg(2+): Asp191, Glu195, Glu227, and Glu231. A substrate-binding site is contributed by Ser252.

Belongs to the ketol-acid reductoisomerase family. Mg(2+) serves as cofactor.

The catalysed reaction is (2R)-2,3-dihydroxy-3-methylbutanoate + NADP(+) = (2S)-2-acetolactate + NADPH + H(+). It carries out the reaction (2R,3R)-2,3-dihydroxy-3-methylpentanoate + NADP(+) = (S)-2-ethyl-2-hydroxy-3-oxobutanoate + NADPH + H(+). It participates in amino-acid biosynthesis; L-isoleucine biosynthesis; L-isoleucine from 2-oxobutanoate: step 2/4. The protein operates within amino-acid biosynthesis; L-valine biosynthesis; L-valine from pyruvate: step 2/4. In terms of biological role, involved in the biosynthesis of branched-chain amino acids (BCAA). Catalyzes an alkyl-migration followed by a ketol-acid reduction of (S)-2-acetolactate (S2AL) to yield (R)-2,3-dihydroxy-isovalerate. In the isomerase reaction, S2AL is rearranged via a Mg-dependent methyl migration to produce 3-hydroxy-3-methyl-2-ketobutyrate (HMKB). In the reductase reaction, this 2-ketoacid undergoes a metal-dependent reduction by NADPH to yield (R)-2,3-dihydroxy-isovalerate. The polypeptide is Ketol-acid reductoisomerase (NADP(+)) (Bartonella tribocorum (strain CIP 105476 / IBS 506)).